A 280-amino-acid chain; its full sequence is Protein MGF 505-3R (280 aa).

This sequence belongs to the asfivirus MGF 505 family.

Plays a role in virus cell tropism, and may be required for efficient virus replication in macrophages. This African swine fever virus (isolate Warthog/Namibia/Wart80/1980) (ASFV) protein is Protein MGF 505-3R.